Consider the following 1307-residue polypeptide: Rho1 guanine nucleotide exchange factor TUS1 (1307 aa).

Residues 1–10 (MYRYNRSSPF) are compositionally biased toward polar residues. Disordered regions lie at residues 1–144 (MYRY…FIGN), 164–194 (PFAN…SDLR), and 219–239 (EDSE…NVSG). Positions 12–29 (RTPEKRVSRQESQRKSIE) are enriched in basic and acidic residues. Residues 37–79 (NTRNSFLDDSDNGTDNISIGWTPISDTQQFQSPVPQAFTFTSK) show a composition bias toward polar residues. A compositionally biased stretch (low complexity) spans 87 to 97 (TSSSESTPKST). Over residues 176–194 (SPRDSSKQQAHFSDESDLR) the composition is skewed to basic and acidic residues. One can recognise a DH domain in the interval 467–657 (QRQSFIFDLI…EKLNFEVNQV (191 aa)). The PH domain occupies 715-877 (KLVLSGTVYK…WIDAIMESFK (163 aa)). The segment at 780-802 (TSKQPLRNYSQKEHKSPMHNFST) is disordered. In terms of domain architecture, CNH spans 938–1279 (TTRILCCEDV…KLASSERREK (342 aa)).

Interacts with RHO1.

Functionally, guanine nucleotide-exchange factor (GEF) for RHO1 that stimulates the exchange of RHO1 GDP-bound form into GTP-bound form. Required for signaling of cell wall defects to RHO1. The polypeptide is Rho1 guanine nucleotide exchange factor TUS1 (TUS1) (Saccharomyces cerevisiae (strain ATCC 204508 / S288c) (Baker's yeast)).